The primary structure comprises 378 residues: MHKWITFPHREGTCSRQAHADFPEQAIYEREAGRSGFFGPAAHFHHQHAPTGWSEWEGELRPRAFNFNHVEGVNALSPWQVPLLLHNHEVKVRVWKLEQAMPALARNADGDELLFIHQGKADLYCDYGHMVVSEGDYALIPRSTNWRLEPIEPLFILMIENTDAAYALPEKGLVGNHAVFDPAVLDVPSINDQFRAQYSEQQTQVQVKRHGQLSTITFPFNPLDAVGWHGDLSVVRLNWRDIRPLMSHRYHLPPSAHTTFVGQGFVVCTFVPRPIESDPGALKVPFYHNNDDYDEVLFYHAGDFFSRDNIEAGMVTFHPAGFTHGPHPKAFQAGLEYRKKFTDEVAVMIDTRHALQFSDAAQQVENRQYVYSWQSKVE.

Fe cation-binding residues include histidine 288, aspartate 294, and histidine 324.

This sequence belongs to the homogentisate dioxygenase family. Fe cation is required as a cofactor.

This chain is Putative dioxygenase VC_1345, found in Vibrio cholerae serotype O1 (strain ATCC 39315 / El Tor Inaba N16961).